A 312-amino-acid chain; its full sequence is Dihydroorotate dehydrogenase B (NAD(+)), catalytic subunit (312 aa).

Residues serine 23 and 47–48 contribute to the FMN site; that span reads KA. Residues lysine 47 and 71-75 each bind substrate; that span reads NAIGL. Positions 103 and 131 each coordinate FMN. Asparagine 131 is a binding site for substrate. Residue cysteine 134 is the Nucleophile of the active site. FMN is bound by residues lysine 171 and isoleucine 197. Position 198–199 (198–199) interacts with substrate; sequence NT. FMN-binding positions include glycine 223, 249–250, and 271–272; these read GG and GT.

This sequence belongs to the dihydroorotate dehydrogenase family. Type 1 subfamily. In terms of assembly, heterotetramer of 2 PyrK and 2 PyrD type B subunits. Requires FMN as cofactor.

It is found in the cytoplasm. It catalyses the reaction (S)-dihydroorotate + NAD(+) = orotate + NADH + H(+). It participates in pyrimidine metabolism; UMP biosynthesis via de novo pathway; orotate from (S)-dihydroorotate (NAD(+) route): step 1/1. In terms of biological role, catalyzes the conversion of dihydroorotate to orotate with NAD(+) as electron acceptor. This Streptococcus pneumoniae serotype 4 (strain ATCC BAA-334 / TIGR4) protein is Dihydroorotate dehydrogenase B (NAD(+)), catalytic subunit (pyrDB).